The sequence spans 403 residues: Poly(rC)-binding protein 4 (403 aa).

3 consecutive KH domains span residues Thr17–Gly67, Pro101–Gly154, and Thr241–Gly293.

Its subcellular location is the cytoplasm. In terms of biological role, single-stranded nucleic acid binding protein that binds preferentially to oligo dC. This Homo sapiens (Human) protein is Poly(rC)-binding protein 4 (PCBP4).